Reading from the N-terminus, the 661-residue chain is Sodium/potassium/calcium exchanger 2 (661 aa).

Residues methionine 1–arginine 38 are Cytoplasmic-facing. Residues valine 39–phenylalanine 59 form a helical membrane-spanning segment. Over serine 60–lysine 132 the chain is Extracellular. A disordered region spans residues proline 99–tyrosine 120. Over residues lysine 105–tyrosine 120 the composition is skewed to basic and acidic residues. A glycan (N-linked (GlcNAc...) asparagine) is linked at asparagine 111. A helical transmembrane segment spans residues glycine 133–cysteine 153. Topologically, residues aspartate 154 to threonine 178 are cytoplasmic. One copy of the Alpha-1 repeat lies at valine 174 to phenylalanine 214. The helical transmembrane segment at phenylalanine 179–alanine 199 threads the bilayer. Residues histidine 200–glycine 204 lie on the Extracellular side of the membrane. The chain crosses the membrane as a helical span at residues isoleucine 205–leucine 225. Topologically, residues phenylalanine 226–serine 243 are cytoplasmic. Residues phenylalanine 244 to tryptophan 264 form a helical membrane-spanning segment. Position 265 (glutamate 265) is a topological domain, extracellular. Residues serine 266–valine 286 form a helical membrane-spanning segment. Residues glutamate 287 to lysine 497 are Cytoplasmic-facing. A disordered region spans residues glutamate 306–serine 336. 2 positions are modified to phosphoserine: serine 336 and serine 340. Residues aspartate 397–leucine 439 form a disordered region. A compositionally biased stretch (polar residues) spans proline 415 to leucine 439. A helical transmembrane segment spans residues phenylalanine 498–valine 518. The Extracellular segment spans residues tryptophan 519–glutamate 533. A helical membrane pass occupies residues isoleucine 534–isoleucine 554. The stretch at alanine 541 to asparagine 572 is one Alpha-2 repeat. The Cytoplasmic segment spans residues valine 555–valine 569. A helical transmembrane segment spans residues glycine 570 to isoleucine 590. Residues histidine 591–glycine 602 are Extracellular-facing. Residues leucine 603–leucine 623 form a helical membrane-spanning segment. The Cytoplasmic portion of the chain corresponds to cysteine 624–lysine 630. A helical membrane pass occupies residues isoleucine 631–glutamate 651. Residues aspartate 652–isoleucine 661 are Extracellular-facing.

It belongs to the Ca(2+):cation antiporter (CaCA) (TC 2.A.19) family. SLC24A subfamily.

The protein resides in the cell membrane. It catalyses the reaction Ca(2+)(out) + K(+)(out) + 4 Na(+)(in) = Ca(2+)(in) + K(+)(in) + 4 Na(+)(out). Its function is as follows. Calcium, potassium:sodium antiporter that transports 1 Ca(2+) and 1 K(+) in exchange for 4 Na(+). Required for learming and memory by regulating neuronal Ca(2+), which is essential for the development of synaptic plasticity. The protein is Sodium/potassium/calcium exchanger 2 (SLC24A2) of Homo sapiens (Human).